Consider the following 487-residue polypeptide: 3-octaprenyl-4-hydroxybenzoate carboxy-lyase (487 aa).

Asparagine 172 serves as a coordination point for Mn(2+). Prenylated FMN contacts are provided by residues 175 to 177 (IYR), 189 to 191 (RWL), and 194 to 195 (RG). Glutamate 238 serves as a coordination point for Mn(2+). Aspartate 287 acts as the Proton donor in catalysis.

Belongs to the UbiD family. As to quaternary structure, homohexamer. Prenylated FMN is required as a cofactor. The cofactor is Mn(2+).

The protein localises to the cell membrane. The catalysed reaction is a 4-hydroxy-3-(all-trans-polyprenyl)benzoate + H(+) = a 2-(all-trans-polyprenyl)phenol + CO2. It functions in the pathway cofactor biosynthesis; ubiquinone biosynthesis. Its function is as follows. Catalyzes the decarboxylation of 3-octaprenyl-4-hydroxy benzoate to 2-octaprenylphenol, an intermediate step in ubiquinone biosynthesis. This is 3-octaprenyl-4-hydroxybenzoate carboxy-lyase from Dechloromonas aromatica (strain RCB).